The sequence spans 101 residues: Integration host factor subunit beta (101 aa).

Residues 62–84 (RNPKTGESVALPGKHVPHFKPGK) are disordered.

This sequence belongs to the bacterial histone-like protein family. Heterodimer of an alpha and a beta chain.

Its function is as follows. This protein is one of the two subunits of integration host factor, a specific DNA-binding protein that functions in genetic recombination as well as in transcriptional and translational control. This is Integration host factor subunit beta from Stenotrophomonas maltophilia (strain K279a).